An 897-amino-acid polypeptide reads, in one-letter code: Protein translocase subunit SecA (897 aa).

ATP contacts are provided by residues glutamine 89, 107 to 111 (GEGKT), and aspartate 517. The segment covering 839–856 (DDAQATHSNPNEQTKQAS) has biased composition (polar residues). The tract at residues 839 to 897 (DDAQATHSNPNEQTKQASITNNIQTQTDQQNTYQRKEKKVGRNEPCPCGSGKKYKKCHG) is disordered. Low complexity predominate over residues 857–870 (ITNNIQTQTDQQNT). Cysteine 884, cysteine 886, cysteine 895, and histidine 896 together coordinate Zn(2+).

This sequence belongs to the SecA family. As to quaternary structure, monomer and homodimer. Part of the essential Sec protein translocation apparatus which comprises SecA, SecYEG and auxiliary proteins SecDF-YajC and YidC. The cofactor is Zn(2+).

The protein localises to the cell inner membrane. Its subcellular location is the cytoplasm. It carries out the reaction ATP + H2O + cellular proteinSide 1 = ADP + phosphate + cellular proteinSide 2.. Part of the Sec protein translocase complex. Interacts with the SecYEG preprotein conducting channel. Has a central role in coupling the hydrolysis of ATP to the transfer of proteins into and across the cell membrane, serving as an ATP-driven molecular motor driving the stepwise translocation of polypeptide chains across the membrane. The polypeptide is Protein translocase subunit SecA (Vesicomyosocius okutanii subsp. Calyptogena okutanii (strain HA)).